Consider the following 545-residue polypeptide: Glucose-6-phosphate isomerase (545 aa).

The active-site Proton donor is the glutamate 351. Catalysis depends on residues histidine 382 and lysine 510.

This sequence belongs to the GPI family.

The protein localises to the cytoplasm. The catalysed reaction is alpha-D-glucose 6-phosphate = beta-D-fructose 6-phosphate. It participates in carbohydrate biosynthesis; gluconeogenesis. The protein operates within carbohydrate degradation; glycolysis; D-glyceraldehyde 3-phosphate and glycerone phosphate from D-glucose: step 2/4. In terms of biological role, catalyzes the reversible isomerization of glucose-6-phosphate to fructose-6-phosphate. This Shewanella baltica (strain OS223) protein is Glucose-6-phosphate isomerase.